The primary structure comprises 159 residues: SsrA-binding protein (159 aa).

Residues 137 to 147 (LAERQANRETE) show a composition bias toward basic and acidic residues. The disordered stretch occupies residues 137-159 (LAERQANRETEQAVGRRLKGMHD).

It belongs to the SmpB family.

It is found in the cytoplasm. Required for rescue of stalled ribosomes mediated by trans-translation. Binds to transfer-messenger RNA (tmRNA), required for stable association of tmRNA with ribosomes. tmRNA and SmpB together mimic tRNA shape, replacing the anticodon stem-loop with SmpB. tmRNA is encoded by the ssrA gene; the 2 termini fold to resemble tRNA(Ala) and it encodes a 'tag peptide', a short internal open reading frame. During trans-translation Ala-aminoacylated tmRNA acts like a tRNA, entering the A-site of stalled ribosomes, displacing the stalled mRNA. The ribosome then switches to translate the ORF on the tmRNA; the nascent peptide is terminated with the 'tag peptide' encoded by the tmRNA and targeted for degradation. The ribosome is freed to recommence translation, which seems to be the essential function of trans-translation. The polypeptide is SsrA-binding protein (Nocardioides sp. (strain ATCC BAA-499 / JS614)).